We begin with the raw amino-acid sequence, 28 residues long: MVGNFPGANYSRDTRRAEIDIQIDIQKI.

This is an uncharacterized protein from Archaeoglobus fulgidus (strain ATCC 49558 / DSM 4304 / JCM 9628 / NBRC 100126 / VC-16).